A 423-amino-acid polypeptide reads, in one-letter code: Serine--tRNA ligase (423 aa).

Thr-231–Glu-233 contributes to the L-serine binding site. Arg-262–Glu-264 lines the ATP pocket. Glu-285 is a binding site for L-serine. Glu-349–Ser-352 contacts ATP. Ser-384 lines the L-serine pocket.

Belongs to the class-II aminoacyl-tRNA synthetase family. Type-1 seryl-tRNA synthetase subfamily. In terms of assembly, homodimer. The tRNA molecule binds across the dimer.

Its subcellular location is the cytoplasm. It catalyses the reaction tRNA(Ser) + L-serine + ATP = L-seryl-tRNA(Ser) + AMP + diphosphate + H(+). The catalysed reaction is tRNA(Sec) + L-serine + ATP = L-seryl-tRNA(Sec) + AMP + diphosphate + H(+). It participates in aminoacyl-tRNA biosynthesis; selenocysteinyl-tRNA(Sec) biosynthesis; L-seryl-tRNA(Sec) from L-serine and tRNA(Sec): step 1/1. Catalyzes the attachment of serine to tRNA(Ser). Is also able to aminoacylate tRNA(Sec) with serine, to form the misacylated tRNA L-seryl-tRNA(Sec), which will be further converted into selenocysteinyl-tRNA(Sec). This chain is Serine--tRNA ligase, found in Lactococcus lactis subsp. lactis (strain IL1403) (Streptococcus lactis).